The following is a 493-amino-acid chain: Ketol-acid reductoisomerase (NADP(+)) (493 aa).

Positions 14–208 (LDQLGRCRFM…GGHRAGVLES (195 aa)) constitute a KARI N-terminal Rossmann domain. Residues 45 to 48 (CGAQ), arginine 68, arginine 76, serine 78, and 108 to 110 (DKQ) each bind NADP(+). Histidine 132 is a catalytic residue. Residue glycine 158 coordinates NADP(+). KARI C-terminal knotted domains are found at residues 209–345 (SFVA…APKG) and 346–486 (ENIK…MTDM). Residues aspartate 217, glutamate 221, glutamate 390, and glutamate 394 each contribute to the Mg(2+) site. Position 415 (serine 415) interacts with substrate.

This sequence belongs to the ketol-acid reductoisomerase family. Mg(2+) is required as a cofactor.

The catalysed reaction is (2R)-2,3-dihydroxy-3-methylbutanoate + NADP(+) = (2S)-2-acetolactate + NADPH + H(+). The enzyme catalyses (2R,3R)-2,3-dihydroxy-3-methylpentanoate + NADP(+) = (S)-2-ethyl-2-hydroxy-3-oxobutanoate + NADPH + H(+). The protein operates within amino-acid biosynthesis; L-isoleucine biosynthesis; L-isoleucine from 2-oxobutanoate: step 2/4. It participates in amino-acid biosynthesis; L-valine biosynthesis; L-valine from pyruvate: step 2/4. Functionally, involved in the biosynthesis of branched-chain amino acids (BCAA). Catalyzes an alkyl-migration followed by a ketol-acid reduction of (S)-2-acetolactate (S2AL) to yield (R)-2,3-dihydroxy-isovalerate. In the isomerase reaction, S2AL is rearranged via a Mg-dependent methyl migration to produce 3-hydroxy-3-methyl-2-ketobutyrate (HMKB). In the reductase reaction, this 2-ketoacid undergoes a metal-dependent reduction by NADPH to yield (R)-2,3-dihydroxy-isovalerate. The polypeptide is Ketol-acid reductoisomerase (NADP(+)) (Histophilus somni (strain 2336) (Haemophilus somnus)).